The chain runs to 86 residues: Large ribosomal subunit protein eL43 (86 aa).

Residues 38–60 (CPFCGHKGKVYRLSTGVWACKKC) form a C4-type zinc finger.

This sequence belongs to the eukaryotic ribosomal protein eL43 family. The cofactor is Zn(2+).

This Desulfurococcus amylolyticus (strain DSM 18924 / JCM 16383 / VKM B-2413 / 1221n) (Desulfurococcus kamchatkensis) protein is Large ribosomal subunit protein eL43.